Reading from the N-terminus, the 338-residue chain is MVKKVAVLGAGSWGSILANMLVQNGNDVVAWTNMEEQAKELNEQHSNEHYVPGFKYDERLVATTDLEVALKDVDAVLFVVPTKVMRLVAQQMVEVLKKTGQKPIIVHASKGLELGTHKRLSEVLAEEIPSELRQAIVVLSGPSHAEEVAKQDLTLVTAASSDLASAEAVQKLFMNNYFRVYTNDDIVGVEMGAALKNVIAIGAGALHGLGYGDDAKAALITRGLAEISRLGVAFGANPLTFIGLSGVGDLIVTATSVHSRNWRAGNELGQGMKLDEVIDTMGMVIEGVPSTKAAYELAQQKNIEMPITEAIYDVLYNEKGVKEAIDELMHRDGRSELE.

Positions 12, 13, and 110 each coordinate NADPH. Sn-glycerol 3-phosphate contacts are provided by Lys-110, Gly-141, and Ser-143. Ala-145 contributes to the NADPH binding site. Sn-glycerol 3-phosphate-binding residues include Lys-196, Asp-249, Ser-259, Arg-260, and Asn-261. The active-site Proton acceptor is Lys-196. Arg-260 provides a ligand contact to NADPH. Positions 284 and 286 each coordinate NADPH.

This sequence belongs to the NAD-dependent glycerol-3-phosphate dehydrogenase family.

The protein localises to the cytoplasm. It catalyses the reaction sn-glycerol 3-phosphate + NAD(+) = dihydroxyacetone phosphate + NADH + H(+). The catalysed reaction is sn-glycerol 3-phosphate + NADP(+) = dihydroxyacetone phosphate + NADPH + H(+). The protein operates within membrane lipid metabolism; glycerophospholipid metabolism. Catalyzes the reduction of the glycolytic intermediate dihydroxyacetone phosphate (DHAP) to sn-glycerol 3-phosphate (G3P), the key precursor for phospholipid synthesis. This is Glycerol-3-phosphate dehydrogenase [NAD(P)+] from Pediococcus pentosaceus (strain ATCC 25745 / CCUG 21536 / LMG 10740 / 183-1w).